The primary structure comprises 205 residues: Small ribosomal subunit protein uS4 (205 aa).

The S4 RNA-binding domain occupies 110–172 (RRLQTIIYRK…VGSPITKEKL (63 aa)). Positions 173 to 205 (MAKPQPASAPKAAAAPKAAAAPAEAAAAPKKEE) are disordered. The segment covering 174–205 (AKPQPASAPKAAAAPKAAAAPAEAAAAPKKEE) has biased composition (low complexity).

Belongs to the universal ribosomal protein uS4 family. Part of the 30S ribosomal subunit. Contacts protein S5. The interaction surface between S4 and S5 is involved in control of translational fidelity.

Functionally, one of the primary rRNA binding proteins, it binds directly to 16S rRNA where it nucleates assembly of the body of the 30S subunit. With S5 and S12 plays an important role in translational accuracy. The protein is Small ribosomal subunit protein uS4 of Methanocella arvoryzae (strain DSM 22066 / NBRC 105507 / MRE50).